The primary structure comprises 196 residues: CASP-like protein 2A2 (196 aa).

At 1-26 the chain is on the cytoplasmic side; it reads MAQGKESVSVVEMEGSGNGPAVEMRH. The helical transmembrane segment at 27 to 47 threads the bilayer; sequence FETLFRLLPVGLCISALVLML. Residues 48–68 are Extracellular-facing; the sequence is KSEQSDQYMQLDYSNVDAFRC. Residues 69–89 traverse the membrane as a helical segment; that stretch reads LAYANGICAGYSLISAFDSMV. At 90–98 the chain is on the cytoplasmic side; the sequence is PVSHHISRS. A helical membrane pass occupies residues 99–119; that stretch reads WILFLLDQGITYLMLAGGAVA. The Extracellular segment spans residues 120–148; sequence TQVLYVAYKGDEKATWEQICGSYGRFCNR. A helical membrane pass occupies residues 149–169; sequence AGASVIISFFALVCFLLLSLL. Topologically, residues 170–196 are cytoplasmic; it reads SAYRLFSKYDPPIHGGAKLEDQTTAQI.

Belongs to the Casparian strip membrane proteins (CASP) family. In terms of assembly, homodimer and heterodimers.

It is found in the cell membrane. In Picea sitchensis (Sitka spruce), this protein is CASP-like protein 2A2.